A 222-amino-acid chain; its full sequence is Probable transaldolase (222 aa).

The Schiff-base intermediate with substrate role is filled by lysine 91.

This sequence belongs to the transaldolase family. Type 3B subfamily.

The protein resides in the cytoplasm. The enzyme catalyses D-sedoheptulose 7-phosphate + D-glyceraldehyde 3-phosphate = D-erythrose 4-phosphate + beta-D-fructose 6-phosphate. It functions in the pathway carbohydrate degradation; pentose phosphate pathway; D-glyceraldehyde 3-phosphate and beta-D-fructose 6-phosphate from D-ribose 5-phosphate and D-xylulose 5-phosphate (non-oxidative stage): step 2/3. In terms of biological role, transaldolase is important for the balance of metabolites in the pentose-phosphate pathway. This chain is Probable transaldolase, found in Pelodictyon phaeoclathratiforme (strain DSM 5477 / BU-1).